The sequence spans 350 residues: Twinfilin-1 (350 aa).

The residue at position 2 (Ser2) is an N-acetylserine. Residues 2–139 form the ADF-H 1 domain; sequence SHRTGIQASE…SLHGYKKYLL (138 aa). A phosphoserine mark is found at Ser143 and Ser277. The region spanning 175 to 313 is the ADF-H 2 domain; that stretch reads LQGVAFPISR…TADFLYEEVH (139 aa). Tyr309 carries the phosphotyrosine modification. Residues 316–350 form a disordered region; sequence QHAHKQSFAKPKGPAGKRGIRRLIRGPAETEATTD. Phosphothreonine is present on Thr349.

Belongs to the actin-binding proteins ADF family. Twinfilin subfamily. In terms of assembly, interacts with G-actin; ADP-actin form and capping protein (CP). May also be able to interact with TWF2 and phosphoinositides, PI(4,5)P2. When bound to PI(4,5)P2, it is down-regulated. Interacts with ACTG1. Post-translationally, phosphorylated on serine and threonine residues.

It is found in the cytoplasm. It localises to the cytoskeleton. Functionally, actin-binding protein involved in motile and morphological processes. Inhibits actin polymerization, likely by sequestering G-actin. By capping the barbed ends of filaments, it also regulates motility. Seems to play an important role in clathrin-mediated endocytosis and distribution of endocytic organelles. This chain is Twinfilin-1 (TWF1), found in Pongo abelii (Sumatran orangutan).